The sequence spans 114 residues: T cell receptor beta variable 10-3 (114 aa).

Residues 1–21 (MGTRLFFYVALCLLWTGHMDA) form the signal peptide. An Ig-like domain is found at 22–114 (GITQSPRHKV…TSVYFCAISE (93 aa)). A disulfide bridge links Cys42 with Cys110.

In terms of assembly, alpha-beta TR is a heterodimer composed of an alpha and beta chain; disulfide-linked. The alpha-beta TR is associated with the transmembrane signaling CD3 coreceptor proteins to form the TR-CD3 (TcR or TCR). The assembly of alpha-beta TR heterodimers with CD3 occurs in the endoplasmic reticulum where a single alpha-beta TR heterodimer associates with one CD3D-CD3E heterodimer, one CD3G-CD3E heterodimer and one CD247 homodimer forming a stable octameric structure. CD3D-CD3E and CD3G-CD3E heterodimers preferentially associate with TR alpha and TR beta chains, respectively. The association of the CD247 homodimer is the last step of TcR assembly in the endoplasmic reticulum and is required for transport to the cell surface.

The protein localises to the cell membrane. Functionally, v region of the variable domain of T cell receptor (TR) beta chain that participates in the antigen recognition. Alpha-beta T cell receptors are antigen specific receptors which are essential to the immune response and are present on the cell surface of T lymphocytes. Recognize peptide-major histocompatibility (MH) (pMH) complexes that are displayed by antigen presenting cells (APC), a prerequisite for efficient T cell adaptive immunity against pathogens. Binding of alpha-beta TR to pMH complex initiates TR-CD3 clustering on the cell surface and intracellular activation of LCK that phosphorylates the ITAM motifs of CD3G, CD3D, CD3E and CD247 enabling the recruitment of ZAP70. In turn ZAP70 phosphorylates LAT, which recruits numerous signaling molecules to form the LAT signalosome. The LAT signalosome propagates signal branching to three major signaling pathways, the calcium, the mitogen-activated protein kinase (MAPK) kinase and the nuclear factor NF-kappa-B (NF-kB) pathways, leading to the mobilization of transcription factors that are critical for gene expression and essential for T cell growth and differentiation. The T cell repertoire is generated in the thymus, by V-(D)-J rearrangement. This repertoire is then shaped by intrathymic selection events to generate a peripheral T cell pool of self-MH restricted, non-autoaggressive T cells. Post-thymic interaction of alpha-beta TR with the pMH complexes shapes TR structural and functional avidity. This is T cell receptor beta variable 10-3 from Homo sapiens (Human).